The chain runs to 369 residues: Anhydro-N-acetylmuramic acid kinase (369 aa).

An ATP-binding site is contributed by 9–16 (GTSLDAVD).

Belongs to the anhydro-N-acetylmuramic acid kinase family.

It carries out the reaction 1,6-anhydro-N-acetyl-beta-muramate + ATP + H2O = N-acetyl-D-muramate 6-phosphate + ADP + H(+). It functions in the pathway amino-sugar metabolism; 1,6-anhydro-N-acetylmuramate degradation. It participates in cell wall biogenesis; peptidoglycan recycling. In terms of biological role, catalyzes the specific phosphorylation of 1,6-anhydro-N-acetylmuramic acid (anhMurNAc) with the simultaneous cleavage of the 1,6-anhydro ring, generating MurNAc-6-P. Is required for the utilization of anhMurNAc either imported from the medium or derived from its own cell wall murein, and thus plays a role in cell wall recycling. This is Anhydro-N-acetylmuramic acid kinase from Phenylobacterium zucineum (strain HLK1).